Here is an 808-residue protein sequence, read N- to C-terminus: Putative dimethyl sulfoxide reductase chain YnfE (808 aa).

The tat-type signal signal peptide spans 1–43 (MSKNERMVGISRRTLVKSTAIGSLALAAGGFSLPFTLRNAAAA). In terms of domain architecture, 4Fe-4S Mo/W bis-MGD-type spans 49–110 (EKVVWGACSV…SIRRRINHPD (62 aa)). [4Fe-4S] cluster-binding residues include Cys-56, Cys-60, Cys-64, and Cys-96. Ser-196 is a Mo-bis(molybdopterin guanine dinucleotide) binding site.

The protein belongs to the prokaryotic molybdopterin-containing oxidoreductase family. It depends on [4Fe-4S] cluster as a cofactor. Mo-bis(molybdopterin guanine dinucleotide) serves as cofactor. In terms of processing, exported by the Tat system. The position of the signal peptide cleavage has not been experimentally proven.

It localises to the cell membrane. In terms of biological role, terminal reductase during anaerobic growth on various sulfoxide and N-oxide compounds. This Escherichia coli (strain K12) protein is Putative dimethyl sulfoxide reductase chain YnfE (ynfE).